The primary structure comprises 156 residues: Small ribosomal subunit protein uS7 (156 aa).

Belongs to the universal ribosomal protein uS7 family. In terms of assembly, part of the 30S ribosomal subunit. Contacts proteins S9 and S11.

In terms of biological role, one of the primary rRNA binding proteins, it binds directly to 16S rRNA where it nucleates assembly of the head domain of the 30S subunit. Is located at the subunit interface close to the decoding center, probably blocks exit of the E-site tRNA. This chain is Small ribosomal subunit protein uS7, found in Desulfitobacterium hafniense (strain DSM 10664 / DCB-2).